The primary structure comprises 190 residues: UPF0340 protein BC_5317 (190 aa).

Belongs to the UPF0340 family.

In Bacillus cereus (strain ATCC 14579 / DSM 31 / CCUG 7414 / JCM 2152 / NBRC 15305 / NCIMB 9373 / NCTC 2599 / NRRL B-3711), this protein is UPF0340 protein BC_5317.